Here is a 729-residue protein sequence, read N- to C-terminus: Fibroblast growth factor receptor homolog 1 (729 aa).

Residues 1 to 36 form the signal peptide; sequence MAAAWSWRASHSTITMTSGSLVVLFLLLSIWQPAVQ. Over 37-309 the chain is Extracellular; that stretch reads VEGRRQMANS…VASGSLHSTS (273 aa). The segment at 56–101 is disordered; that stretch reads ARSQNKTPAITNNANQSSTSSADLDDGAADDDDNKADLPVNVSSKP. The span at 66–77 shows a compositional bias: low complexity; it reads TNNANQSSTSSA. Asparagine 70 is a glycosylation site (N-linked (GlcNAc...) asparagine). The span at 78–89 shows a compositional bias: acidic residues; the sequence is DLDDGAADDDDN. N-linked (GlcNAc...) asparagine glycosylation is found at asparagine 96, asparagine 134, asparagine 140, asparagine 171, asparagine 207, asparagine 213, asparagine 242, asparagine 246, and asparagine 282. Ig-like C2-type domains are found at residues 106–192 and 203–279; these read PKKM…VIVS and TGPL…NSLG. Cysteines 125 and 174 form a disulfide. A disulfide bond links cysteine 220 and cysteine 272. A helical membrane pass occupies residues 310 to 330; sequence FVYIFVFGGLIFIFMTTLFVF. At 331–729 the chain is on the cytoplasmic side; the sequence is YAIRKMKHEK…TDNLQKWCNY (399 aa). The Protein kinase domain occupies 416-692; the sequence is LVLGATLGEG…EIVEYMDKLL (277 aa). ATP-binding positions include 422-430 and lysine 443; that span reads LGEGAFGRV. Residue aspartate 556 is the Proton acceptor of the active site. Position 587 is a phosphotyrosine; by autocatalysis (tyrosine 587).

This sequence belongs to the protein kinase superfamily. Tyr protein kinase family. Fibroblast growth factor receptor subfamily. In terms of tissue distribution, in early embryos, expression is specific to mesodermal primordium and invaginated mesodermal cells. At later stages, expression is seen in putative muscle precursor cells and in the CNS.

The protein localises to the membrane. It carries out the reaction L-tyrosyl-[protein] + ATP = O-phospho-L-tyrosyl-[protein] + ADP + H(+). Functionally, may be required for patterning of muscle precursor cells. May be essential for generation of mesodermal and endodermal layers, invaginations of various types of cells and CNS formation. This is Fibroblast growth factor receptor homolog 1 (htl) from Drosophila melanogaster (Fruit fly).